Here is a 241-residue protein sequence, read N- to C-terminus: MADS-box transcription factor 57 (241 aa).

Residues 1-61 (MGRGKIVIRR…GRLYEFSSTN (61 aa)) form the MADS-box domain. Positions 85–178 (IKIWQREAAS…LNVMSQQKLE (94 aa)) constitute a K-box domain. Residues 216 to 241 (LELSQSQQREGECSKTAAPELGLHLP) form a disordered region.

Interacts with TB1. Expressed in seedling roots and shoots. Highly expressed in young leaves.

The protein localises to the nucleus. Transcriptional factor that targets the CArG motif 5'-C(A/T)TTAAAAAG-3' in the promoter of D14. Directly suppresses D14 expression to control the outgrowth of axillary buds. The protein is MADS-box transcription factor 57 of Oryza sativa subsp. japonica (Rice).